We begin with the raw amino-acid sequence, 209 residues long: Small ribosomal subunit protein uS4 (209 aa).

Residues 98-158 form the S4 RNA-binding domain; the sequence is SRVDNIVYRL…EKSRSLAAIK (61 aa).

Belongs to the universal ribosomal protein uS4 family. Part of the 30S ribosomal subunit. Contacts protein S5. The interaction surface between S4 and S5 is involved in control of translational fidelity.

One of the primary rRNA binding proteins, it binds directly to 16S rRNA where it nucleates assembly of the body of the 30S subunit. In terms of biological role, with S5 and S12 plays an important role in translational accuracy. The polypeptide is Small ribosomal subunit protein uS4 (Pseudothermotoga lettingae (strain ATCC BAA-301 / DSM 14385 / NBRC 107922 / TMO) (Thermotoga lettingae)).